Consider the following 883-residue polypeptide: Valine--tRNA ligase (883 aa).

The short motif at proline 46–histidine 56 is the 'HIGH' region element. A 'KMSKS' region motif is present at residues lysine 520–serine 524. Residue lysine 523 participates in ATP binding. Positions leucine 809–lysine 883 form a coiled coil.

It belongs to the class-I aminoacyl-tRNA synthetase family. ValS type 1 subfamily. As to quaternary structure, monomer.

The protein localises to the cytoplasm. The catalysed reaction is tRNA(Val) + L-valine + ATP = L-valyl-tRNA(Val) + AMP + diphosphate. Catalyzes the attachment of valine to tRNA(Val). As ValRS can inadvertently accommodate and process structurally similar amino acids such as threonine, to avoid such errors, it has a 'posttransfer' editing activity that hydrolyzes mischarged Thr-tRNA(Val) in a tRNA-dependent manner. This chain is Valine--tRNA ligase, found in Streptococcus mutans serotype c (strain ATCC 700610 / UA159).